The following is a 374-amino-acid chain: Alcohol dehydrogenase S chain (374 aa).

Ser-2 carries the post-translational modification N-acetylserine. 7 residues coordinate Zn(2+): Cys-47, His-68, Cys-98, Cys-101, Cys-104, Cys-112, and Cys-174. NAD(+) is bound by residues 199–204 (GLGGVG), Asp-223, Lys-228, 292–294 (VGV), and Arg-369.

Belongs to the zinc-containing alcohol dehydrogenase family. Class-I subfamily. Dimer of identical or non-identical chains of two types (E and S) coded by 2 separate genes at different loci. It depends on Zn(2+) as a cofactor.

The protein localises to the cytoplasm. It carries out the reaction a primary alcohol + NAD(+) = an aldehyde + NADH + H(+). The catalysed reaction is a secondary alcohol + NAD(+) = a ketone + NADH + H(+). The sequence is that of Alcohol dehydrogenase S chain from Equus caballus (Horse).